The sequence spans 348 residues: Histidinol-phosphate aminotransferase (348 aa).

Residue Lys-207 is modified to N6-(pyridoxal phosphate)lysine.

It belongs to the class-II pyridoxal-phosphate-dependent aminotransferase family. Histidinol-phosphate aminotransferase subfamily. As to quaternary structure, homodimer. Requires pyridoxal 5'-phosphate as cofactor.

The catalysed reaction is L-histidinol phosphate + 2-oxoglutarate = 3-(imidazol-4-yl)-2-oxopropyl phosphate + L-glutamate. The protein operates within amino-acid biosynthesis; L-histidine biosynthesis; L-histidine from 5-phospho-alpha-D-ribose 1-diphosphate: step 7/9. This is Histidinol-phosphate aminotransferase from Crocosphaera subtropica (strain ATCC 51142 / BH68) (Cyanothece sp. (strain ATCC 51142)).